The chain runs to 441 residues: Proline--tRNA ligase (441 aa).

This sequence belongs to the class-II aminoacyl-tRNA synthetase family. ProS type 2 subfamily. In terms of assembly, homodimer.

The protein localises to the cytoplasm. It catalyses the reaction tRNA(Pro) + L-proline + ATP = L-prolyl-tRNA(Pro) + AMP + diphosphate. Catalyzes the attachment of proline to tRNA(Pro) in a two-step reaction: proline is first activated by ATP to form Pro-AMP and then transferred to the acceptor end of tRNA(Pro). The chain is Proline--tRNA ligase from Methylorubrum extorquens (strain PA1) (Methylobacterium extorquens).